The chain runs to 475 residues: ATP-dependent protease ATPase subunit HslU1 (475 aa).

The N-terminal 27 residues, 1–27 (MMRRVTSSLPSALKLGRSLGPNVRFSG), are a transit peptide targeting the mitochondrion. ATP-binding positions include isoleucine 66, 108–113 (GVGKTE), aspartate 286, glutamate 353, and arginine 425.

This sequence belongs to the ClpX chaperone family. HslU subfamily. In terms of assembly, a double ring-shaped homohexamer of HslV is capped on each side by a ring-shaped HslU homohexamer. The assembly of the HslU/HslV complex (HslVU) is dependent on binding of ATP.

The protein localises to the mitochondrion matrix. The protein resides in the kinetoplast. Functionally, ATPase subunit of a proteasome-like degradation complex; this subunit has chaperone activity. The binding of ATP and its subsequent hydrolysis by HslU are essential for unfolding of protein substrates subsequently hydrolyzed by HslV. HslU recognizes the N-terminal part of its protein substrates and unfolds these before they are guided to HslV for hydrolysis. The HslVU protease complex functions in mitochondrial DNA replication by regulating DNA helicase PIF2 protein levels. This is ATP-dependent protease ATPase subunit HslU1 (HslU1) from Trypanosoma brucei brucei (strain 927/4 GUTat10.1).